The primary structure comprises 761 residues: Probable ATP-dependent RNA helicase DDX20 (761 aa).

The Q motif signature appears at 26–54 (VEFSSLLLSKPVLEGLSASGFQRPSPIQL). Residues Arg48, Gln53, 70–77 (AKSGTGKT), and 73–78 (GTGKTC) contribute to the ATP site. Residues 57–231 (IPLGRCGLDL…SRYMREPTFV (175 aa)) enclose the Helicase ATP-binding domain. The DEAD box motif lies at 175–178 (DEAD). In terms of domain architecture, Helicase C-terminal spans 266-415 (SLLELFSKIP…PIPPGIMEEA (150 aa)). Disordered regions lie at residues 428-525 (PKIP…KSHT) and 570-720 (HDAH…EAGQ). A compositionally biased stretch (basic and acidic residues) spans 443–456 (KSEQMKSKPSRESH). A compositionally biased stretch (polar residues) spans 498 to 512 (QHDSTITQKQQNNTL). Low complexity-rich tracts occupy residues 600–613 (SELS…SESS) and 623–635 (ESSS…STLE). A compositionally biased stretch (polar residues) spans 655–679 (TLPSTRVPQQATRSKQKPCQPQSQD). The segment covering 683–707 (HHNLPHKHRTASKSSRRPTGPKRRT) has biased composition (basic residues).

This sequence belongs to the DEAD box helicase family. DDX20 subfamily. As to quaternary structure, part of the core SMN complex.

The protein localises to the cytoplasm. It localises to the nucleus. It catalyses the reaction ATP + H2O = ADP + phosphate + H(+). The catalysed reaction is a ribonucleoside 5'-triphosphate + H2O = a ribonucleoside 5'-diphosphate + phosphate + H(+). In terms of biological role, the SMN complex catalyzes the assembly of small nuclear ribonucleoproteins (snRNPs), the building blocks of the spliceosome, and thereby plays an important role in the splicing of cellular pre-mRNAs. Most spliceosomal snRNPs contain a common set of Sm proteins SNRPB, SNRPD1, SNRPD2, SNRPD3, SNRPE, SNRPF and SNRPG that assemble in a heptameric protein ring on the Sm site of the small nuclear RNA to form the core snRNP (Sm core). In the cytosol, the Sm proteins SNRPD1, SNRPD2, SNRPE, SNRPF and SNRPG are trapped in an inactive 6S pICln-Sm complex by the chaperone CLNS1A that controls the assembly of the core snRNP. To assemble core snRNPs, the SMN complex accepts the trapped 5Sm proteins from CLNS1A forming an intermediate. Binding of snRNA inside 5Sm triggers eviction of the SMN complex, thereby allowing binding of SNRPD3 and SNRPB to complete assembly of the core snRNP. May also play a role in the metabolism of small nucleolar ribonucleoprotein (snoRNPs). In Danio rerio (Zebrafish), this protein is Probable ATP-dependent RNA helicase DDX20 (ddx20).